The following is a 204-amino-acid chain: ADP-ribosylation factor-like protein 15 (204 aa).

Residues 39–46 (GLTGSGKT), 82–86 (ELGGA), and 142–145 (NHQD) each bind GTP.

This sequence belongs to the small GTPase superfamily. Arf family.

The sequence is that of ADP-ribosylation factor-like protein 15 (Arl15) from Mus musculus (Mouse).